Reading from the N-terminus, the 196-residue chain is ATP-dependent Clp protease proteolytic subunit (196 aa).

Residue Ser96 is the Nucleophile of the active site. His121 is a catalytic residue.

The protein belongs to the peptidase S14 family. As to quaternary structure, fourteen ClpP subunits assemble into 2 heptameric rings which stack back to back to give a disk-like structure with a central cavity, resembling the structure of eukaryotic proteasomes.

It is found in the cytoplasm. It catalyses the reaction Hydrolysis of proteins to small peptides in the presence of ATP and magnesium. alpha-casein is the usual test substrate. In the absence of ATP, only oligopeptides shorter than five residues are hydrolyzed (such as succinyl-Leu-Tyr-|-NHMec, and Leu-Tyr-Leu-|-Tyr-Trp, in which cleavage of the -Tyr-|-Leu- and -Tyr-|-Trp bonds also occurs).. Functionally, cleaves peptides in various proteins in a process that requires ATP hydrolysis. Has a chymotrypsin-like activity. Plays a major role in the degradation of misfolded proteins. The chain is ATP-dependent Clp protease proteolytic subunit from Streptococcus gordonii (strain Challis / ATCC 35105 / BCRC 15272 / CH1 / DL1 / V288).